The sequence spans 879 residues: Alanine--tRNA ligase (879 aa).

His566, His570, Cys668, and His672 together coordinate Zn(2+).

Belongs to the class-II aminoacyl-tRNA synthetase family. Zn(2+) serves as cofactor.

It localises to the cytoplasm. The catalysed reaction is tRNA(Ala) + L-alanine + ATP = L-alanyl-tRNA(Ala) + AMP + diphosphate. In terms of biological role, catalyzes the attachment of alanine to tRNA(Ala) in a two-step reaction: alanine is first activated by ATP to form Ala-AMP and then transferred to the acceptor end of tRNA(Ala). Also edits incorrectly charged Ser-tRNA(Ala) and Gly-tRNA(Ala) via its editing domain. The chain is Alanine--tRNA ligase from Clostridium tetani (strain Massachusetts / E88).